Here is a 391-residue protein sequence, read N- to C-terminus: Ferrochelatase (391 aa).

His196 and Glu281 together coordinate Fe cation.

The protein belongs to the ferrochelatase family.

Its subcellular location is the cytoplasm. The enzyme catalyses heme b + 2 H(+) = protoporphyrin IX + Fe(2+). It functions in the pathway porphyrin-containing compound metabolism; protoheme biosynthesis; protoheme from protoporphyrin-IX: step 1/1. Catalyzes the ferrous insertion into protoporphyrin IX. The polypeptide is Ferrochelatase (Synechococcus sp. (strain WH7803)).